The chain runs to 252 residues: 2-succinyl-6-hydroxy-2,4-cyclohexadiene-1-carboxylate synthase (252 aa).

Belongs to the AB hydrolase superfamily. MenH family. As to quaternary structure, monomer.

The enzyme catalyses 5-enolpyruvoyl-6-hydroxy-2-succinyl-cyclohex-3-ene-1-carboxylate = (1R,6R)-6-hydroxy-2-succinyl-cyclohexa-2,4-diene-1-carboxylate + pyruvate. It participates in quinol/quinone metabolism; 1,4-dihydroxy-2-naphthoate biosynthesis; 1,4-dihydroxy-2-naphthoate from chorismate: step 3/7. It functions in the pathway quinol/quinone metabolism; menaquinone biosynthesis. Functionally, catalyzes a proton abstraction reaction that results in 2,5-elimination of pyruvate from 2-succinyl-5-enolpyruvyl-6-hydroxy-3-cyclohexene-1-carboxylate (SEPHCHC) and the formation of 2-succinyl-6-hydroxy-2,4-cyclohexadiene-1-carboxylate (SHCHC). The chain is 2-succinyl-6-hydroxy-2,4-cyclohexadiene-1-carboxylate synthase from Salmonella choleraesuis (strain SC-B67).